A 251-amino-acid polypeptide reads, in one-letter code: Probable transcriptional regulatory protein cu0933 (251 aa).

A disordered region spans residues 56–79 (AKKSSVPNDNIERARKRGSGEEAG).

The protein belongs to the TACO1 family.

The protein localises to the cytoplasm. The protein is Probable transcriptional regulatory protein cu0933 of Corynebacterium urealyticum (strain ATCC 43042 / DSM 7109).